Consider the following 366-residue polypeptide: Chorismate synthase (366 aa).

Positions 48 and 54 each coordinate NADP(+). FMN contacts are provided by residues 125–127 (RSS), 238–239 (NA), glycine 278, 293–297 (KPTSS), and arginine 319.

The protein belongs to the chorismate synthase family. Homotetramer. The cofactor is FMNH2.

It catalyses the reaction 5-O-(1-carboxyvinyl)-3-phosphoshikimate = chorismate + phosphate. It participates in metabolic intermediate biosynthesis; chorismate biosynthesis; chorismate from D-erythrose 4-phosphate and phosphoenolpyruvate: step 7/7. Its function is as follows. Catalyzes the anti-1,4-elimination of the C-3 phosphate and the C-6 proR hydrogen from 5-enolpyruvylshikimate-3-phosphate (EPSP) to yield chorismate, which is the branch point compound that serves as the starting substrate for the three terminal pathways of aromatic amino acid biosynthesis. This reaction introduces a second double bond into the aromatic ring system. In Paraburkholderia phytofirmans (strain DSM 17436 / LMG 22146 / PsJN) (Burkholderia phytofirmans), this protein is Chorismate synthase.